The following is a 430-amino-acid chain: Glutamate-1-semialdehyde 2,1-aminomutase (430 aa).

Lysine 267 carries the post-translational modification N6-(pyridoxal phosphate)lysine.

This sequence belongs to the class-III pyridoxal-phosphate-dependent aminotransferase family. HemL subfamily. As to quaternary structure, homodimer. Pyridoxal 5'-phosphate serves as cofactor.

It localises to the cytoplasm. The catalysed reaction is (S)-4-amino-5-oxopentanoate = 5-aminolevulinate. The protein operates within porphyrin-containing compound metabolism; protoporphyrin-IX biosynthesis; 5-aminolevulinate from L-glutamyl-tRNA(Glu): step 2/2. The protein is Glutamate-1-semialdehyde 2,1-aminomutase of Anaeromyxobacter sp. (strain K).